The primary structure comprises 255 residues: Alpha-acetolactate decarboxylase (255 aa).

It belongs to the alpha-acetolactate decarboxylase family.

The catalysed reaction is (2S)-2-acetolactate + H(+) = (R)-acetoin + CO2. The protein operates within polyol metabolism; (R,R)-butane-2,3-diol biosynthesis; (R,R)-butane-2,3-diol from pyruvate: step 2/3. Functionally, converts acetolactate into acetoin, which can be excreted by the cells. This may be a mechanism for controlling the internal pH of cells in the stationary stage. The polypeptide is Alpha-acetolactate decarboxylase (alsD) (Bacillus subtilis (strain 168)).